Consider the following 382-residue polypeptide: Leucoanthocyanidin reductase (382 aa).

Residues 19–25, R44, and K52 each bind NADP(+); that span reads GGTGFIG. Catalysis depends on K142, which acts as the Proton acceptor. R146 provides a ligand contact to NADP(+).

It belongs to the NmrA-type oxidoreductase family. Isoflavone reductase subfamily. In terms of assembly, monomer.

The enzyme catalyses (2R,3S)-catechin + NADP(+) + H2O = (2R,3S,4S)-leucocyanidin + NADPH + H(+). It functions in the pathway flavonoid metabolism; proanthocyanidin biosynthesis. Catalyzes the synthesis of catechin from 3,4-cis-leucocyanidin. Also synthesizes afzelechin and gallocatechin. The chain is Leucoanthocyanidin reductase (LAR) from Desmodium uncinatum (Silverleaf Spanish clover).